Reading from the N-terminus, the 643-residue chain is Extracellular metalloproteinase 4 (643 aa).

Residues 1–18 (MHGLMLAGLLALPLSVLG) form the signal peptide. The propeptide occupies 19–254 (HPTESHSSGI…VHSVVDYVSA (236 aa)). A compositionally biased stretch (basic and acidic residues) spans 47–57 (TKSDAVPKQDG). The disordered stretch occupies residues 47-73 (TKSDAVPKQDGESFTTSSTGNDNSSSG). Positions 61–73 (TTSSTGNDNSSSG) are enriched in low complexity. N-linked (GlcNAc...) asparagine glycans are attached at residues asparagine 271 and asparagine 420. Position 437 (histidine 437) interacts with Zn(2+). Glutamate 438 is a catalytic residue. A Zn(2+)-binding site is contributed by histidine 441. N-linked (GlcNAc...) asparagine glycans are attached at residues asparagine 603 and asparagine 629.

Belongs to the peptidase M36 family. Requires Zn(2+) as cofactor.

It localises to the secreted. In terms of biological role, secreted metalloproteinase probably acting as a virulence factor. This is Extracellular metalloproteinase 4 (MEP4) from Trichophyton rubrum (Athlete's foot fungus).